Reading from the N-terminus, the 428-residue chain is Trigger factor (428 aa).

Residues 163-248 (GDMVIIDYKG…IHEIKEKEVP (86 aa)) form the PPIase FKBP-type domain.

The protein belongs to the FKBP-type PPIase family. Tig subfamily.

The protein resides in the cytoplasm. The catalysed reaction is [protein]-peptidylproline (omega=180) = [protein]-peptidylproline (omega=0). Its function is as follows. Involved in protein export. Acts as a chaperone by maintaining the newly synthesized protein in an open conformation. Functions as a peptidyl-prolyl cis-trans isomerase. The protein is Trigger factor of Alkaliphilus oremlandii (strain OhILAs) (Clostridium oremlandii (strain OhILAs)).